The chain runs to 717 residues: Fatty acid oxidation complex subunit alpha (717 aa).

Residues 1 to 190 are enoyl-CoA hydratase/isomerase; it reads MIHAGNAITV…KDGAVDAVVA (190 aa). A substrate-binding site is contributed by D298. A 3-hydroxyacyl-CoA dehydrogenase region spans residues 313–717; it reads HPVNQAAVLG…MAANNKKFYG (405 aa). NAD(+) contacts are provided by residues M326, D345, 402-404, K409, and S431; that span reads VTE. H452 functions as the For 3-hydroxyacyl-CoA dehydrogenase activity in the catalytic mechanism. N455 lines the NAD(+) pocket. Position 502 (N502) interacts with substrate.

This sequence in the N-terminal section; belongs to the enoyl-CoA hydratase/isomerase family. In the C-terminal section; belongs to the 3-hydroxyacyl-CoA dehydrogenase family. As to quaternary structure, heterotetramer of two alpha chains (FadB) and two beta chains (FadA).

It carries out the reaction a (3S)-3-hydroxyacyl-CoA + NAD(+) = a 3-oxoacyl-CoA + NADH + H(+). The catalysed reaction is a (3S)-3-hydroxyacyl-CoA = a (2E)-enoyl-CoA + H2O. It catalyses the reaction a 4-saturated-(3S)-3-hydroxyacyl-CoA = a (3E)-enoyl-CoA + H2O. The enzyme catalyses (3S)-3-hydroxybutanoyl-CoA = (3R)-3-hydroxybutanoyl-CoA. It carries out the reaction a (3Z)-enoyl-CoA = a 4-saturated (2E)-enoyl-CoA. The catalysed reaction is a (3E)-enoyl-CoA = a 4-saturated (2E)-enoyl-CoA. It participates in lipid metabolism; fatty acid beta-oxidation. Involved in the aerobic and anaerobic degradation of long-chain fatty acids via beta-oxidation cycle. Catalyzes the formation of 3-oxoacyl-CoA from enoyl-CoA via L-3-hydroxyacyl-CoA. It can also use D-3-hydroxyacyl-CoA and cis-3-enoyl-CoA as substrate. This is Fatty acid oxidation complex subunit alpha from Acinetobacter baumannii (strain AB307-0294).